The sequence spans 557 residues: 2-succinyl-5-enolpyruvyl-6-hydroxy-3-cyclohexene-1-carboxylate synthase (557 aa).

It belongs to the TPP enzyme family. MenD subfamily. Homodimer. The cofactor is Mg(2+). It depends on Mn(2+) as a cofactor. Requires thiamine diphosphate as cofactor.

It carries out the reaction isochorismate + 2-oxoglutarate + H(+) = 5-enolpyruvoyl-6-hydroxy-2-succinyl-cyclohex-3-ene-1-carboxylate + CO2. It functions in the pathway quinol/quinone metabolism; 1,4-dihydroxy-2-naphthoate biosynthesis; 1,4-dihydroxy-2-naphthoate from chorismate: step 2/7. It participates in quinol/quinone metabolism; menaquinone biosynthesis. Functionally, catalyzes the thiamine diphosphate-dependent decarboxylation of 2-oxoglutarate and the subsequent addition of the resulting succinic semialdehyde-thiamine pyrophosphate anion to isochorismate to yield 2-succinyl-5-enolpyruvyl-6-hydroxy-3-cyclohexene-1-carboxylate (SEPHCHC). The sequence is that of 2-succinyl-5-enolpyruvyl-6-hydroxy-3-cyclohexene-1-carboxylate synthase from Phocaeicola vulgatus (strain ATCC 8482 / DSM 1447 / JCM 5826 / CCUG 4940 / NBRC 14291 / NCTC 11154) (Bacteroides vulgatus).